The following is a 329-amino-acid chain: Prostaglandin reductase 1 (329 aa).

Residue Thr-18 is modified to Phosphothreonine. Ser-20 is modified (phosphoserine). Residues 152–155, Lys-178, Tyr-193, Asn-217, 239–245, 270–272, and Asn-321 each bind NADP(+); these read GAVG, CGAISQY, and FIV. Lys-178 bears the N6-(2-hydroxyisobutyryl)lysine; alternate mark. Lys-178 carries the N6-acetyllysine; alternate modification.

This sequence belongs to the NADP-dependent oxidoreductase L4BD family. Monomer or homodimer.

It localises to the cytoplasm. It carries out the reaction 13,14-dihydro-15-oxo-prostaglandin E1 + NADP(+) = 15-oxoprostaglandin E1 + NADPH + H(+). The catalysed reaction is 13,14-dihydro-15-oxo-prostaglandin E2 + NADP(+) = 15-oxoprostaglandin E2 + NADPH + H(+). It catalyses the reaction 13,14-dihydro-15-oxo-prostaglandin F1alpha + NADP(+) = 15-oxoprostaglandin F1alpha + NADPH + H(+). The enzyme catalyses 13,14-dihydro-15-oxo-PGF2alpha + NADP(+) = 15-oxoprostaglandin F2alpha + NADPH + H(+). It carries out the reaction leukotriene B4 + NADP(+) = 12-oxo-leukotriene B4 + NADPH + H(+). The catalysed reaction is 20-hydroxy-leukotriene B4 + NADP(+) = 12-oxo-20-hydroxy-leukotriene B4 + NADPH + H(+). It catalyses the reaction 6-trans-leukotriene B4 + NADP(+) = 12-oxo-(5S)-hydroxy-(6E,8E,10E,14Z)-eicosatetraenoate + NADPH + H(+). The enzyme catalyses (5S,12S)-dihydroxy-(6E,10E,12E,14Z)-eicosatetraenoate + NADP(+) = 12-oxo-(5S)-hydroxy-(6E,8E,10E,14Z)-eicosatetraenoate + NADPH + H(+). It carries out the reaction an n-alkanal + NADP(+) = an alk-2-enal + NADPH + H(+). The catalysed reaction is hexanal + NADP(+) = (E)-hex-2-enal + NADPH + H(+). It catalyses the reaction octanal + NADP(+) = (2E)-octenal + NADPH + H(+). The enzyme catalyses decanal + NADP(+) = (2E)-decenal + NADPH + H(+). It carries out the reaction dodecanal + NADP(+) = (2E)-dodecenal + NADPH + H(+). The catalysed reaction is 4-hydroxynonanal + NADP(+) = (E)-4-hydroxynon-2-enal + NADPH + H(+). It catalyses the reaction pentan-2-one + NADP(+) = (E)-pent-3-en-2-one + NADPH + H(+). The enzyme catalyses nonan-2-one + NADP(+) = (3E)-nonen-2-one + NADPH + H(+). Its function is as follows. NAD(P)H-dependent oxidoreductase involved in metabolic inactivation of pro- and anti-inflammatory eicosanoids: prostaglandins (PG), leukotrienes (LT) and lipoxins (LX). Catalyzes with high efficiency the reduction of the 13,14 double bond of 15-oxoPGs, including 15-oxo-PGE1, 15-oxo-PGE2, 15-oxo-PGF1-alpha and 15-oxo-PGF2-alpha. Catalyzes with lower efficiency the oxidation of the hydroxyl group at C12 of LTB4 and its derivatives, converting them into biologically less active 12-oxo-LTB4 metabolites. Reduces 15-oxo-LXA4 to 13,14 dihydro-15-oxo-LXA4, enhancing neutrophil recruitment at the inflammatory site. Plays a role in metabolic detoxification of alkenals and ketones. Reduces alpha,beta-unsaturated alkenals and ketones, particularly those with medium-chain length, showing highest affinity toward (2E)-decenal and (3E)-3-nonen-2-one. Inactivates 4-hydroxy-2-nonenal, a cytotoxic lipid constituent of oxidized low-density lipoprotein particles. The polypeptide is Prostaglandin reductase 1 (Ptgr1) (Rattus norvegicus (Rat)).